We begin with the raw amino-acid sequence, 443 residues long: Methyl-coenzyme M reductase subunit beta (443 aa).

A coenzyme M-binding site is contributed by Y367. G369 lines the coenzyme B pocket.

The protein belongs to the methyl-coenzyme M reductase beta subunit family. In terms of assembly, MCR is a hexamer of two alpha, two beta, and two gamma chains, forming a dimer of heterotrimers. Coenzyme F430 is required as a cofactor.

The protein localises to the cytoplasm. It carries out the reaction coenzyme B + methyl-coenzyme M = methane + coenzyme M-coenzyme B heterodisulfide. Its pathway is one-carbon metabolism; methyl-coenzyme M reduction; methane from methyl-coenzyme M: step 1/1. Functionally, component of the methyl-coenzyme M reductase (MCR) I that catalyzes the reductive cleavage of methyl-coenzyme M (CoM-S-CH3 or 2-(methylthio)ethanesulfonate) using coenzyme B (CoB or 7-mercaptoheptanoylthreonine phosphate) as reductant which results in the production of methane and the mixed heterodisulfide of CoB and CoM (CoM-S-S-CoB). This is the final step in methanogenesis. This is Methyl-coenzyme M reductase subunit beta (mcrB) from Methanococcus vannielii.